Reading from the N-terminus, the 400-residue chain is MNSLRSVKRLLGARSLSSDGLSESVNSSDREDSLSFQTPSTPSEDEMPQCFEDLIKPQVLSSEASKSLLSLNEGIKMEIVSSLQQKDQKKRNKLIAWMRKKPCYEQPDDFISYIVNTKIDSIDESIIHKLALLLRNEQVIWVEKFIHNGGFGVVFCTIDKISRLEWREELHDSILEQLLLCVKAMCTVQRGLECLSQSTYNVERLISLLLSKKQPCDFVVREVLVQIVHSFYKAHLDKEEGAMQVFSLFSIKDDKDEEVEFLKNVRVDRPFRRWIIELEDVSRNVFWVWNHDSNVIDLEKQYNQVYEAPLGFIGGIETEATSYVAAHIHLINELLEGLPLEKRQRKRLELQLSGLERIMGLRFRKSSQKFHKKLHEALREWIVAAKIDDWPYKLVQTGST.

The segment covering 16–27 (LSSDGLSESVNS) has biased composition (polar residues). Residues 16 to 47 (LSSDGLSESVNSSDREDSLSFQTPSTPSEDEM) form a disordered region. The GBD/FH3 domain maps to 39–400 (PSTPSEDEMP…PYKLVQTGST (362 aa)).

The protein localises to the cytoplasm. This is GTPase-binding protein rid1 (rid1) from Schizosaccharomyces pombe (strain 972 / ATCC 24843) (Fission yeast).